The sequence spans 519 residues: 2-isopropylmalate synthase (519 aa).

One can recognise a Pyruvate carboxyltransferase domain in the interval 12 to 274 (IRIFDTTLRD…DTSIHTSRIV (263 aa)). 4 residues coordinate Mn(2+): D21, H209, H211, and N245. The segment at 396 to 519 (RLASMTISDV…MQNKQNTALA (124 aa)) is regulatory domain.

It belongs to the alpha-IPM synthase/homocitrate synthase family. LeuA type 1 subfamily. As to quaternary structure, homodimer. The cofactor is Mn(2+).

It localises to the cytoplasm. It catalyses the reaction 3-methyl-2-oxobutanoate + acetyl-CoA + H2O = (2S)-2-isopropylmalate + CoA + H(+). It functions in the pathway amino-acid biosynthesis; L-leucine biosynthesis; L-leucine from 3-methyl-2-oxobutanoate: step 1/4. In terms of biological role, catalyzes the condensation of the acetyl group of acetyl-CoA with 3-methyl-2-oxobutanoate (2-ketoisovalerate) to form 3-carboxy-3-hydroxy-4-methylpentanoate (2-isopropylmalate). The chain is 2-isopropylmalate synthase from Xylella fastidiosa (strain M23).